We begin with the raw amino-acid sequence, 333 residues long: Glyceraldehyde-3-phosphate dehydrogenase (333 aa).

NAD(+) is bound by residues 11 to 12, D35, M79, and S121; that span reads RI. Residues 150–152, T181, 210–211, and R233 each bind D-glyceraldehyde 3-phosphate; these read SCT and TG. Catalysis depends on C151, which acts as the Nucleophile. Position 315 (N315) interacts with NAD(+).

It belongs to the glyceraldehyde-3-phosphate dehydrogenase family. As to quaternary structure, homotetramer.

The protein localises to the cytoplasm. The catalysed reaction is D-glyceraldehyde 3-phosphate + phosphate + NAD(+) = (2R)-3-phospho-glyceroyl phosphate + NADH + H(+). It functions in the pathway carbohydrate degradation; glycolysis; pyruvate from D-glyceraldehyde 3-phosphate: step 1/5. Its function is as follows. Catalyzes the oxidative phosphorylation of glyceraldehyde 3-phosphate (G3P) to 1,3-bisphosphoglycerate (BPG) using the cofactor NAD. The first reaction step involves the formation of a hemiacetal intermediate between G3P and a cysteine residue, and this hemiacetal intermediate is then oxidized to a thioester, with concomitant reduction of NAD to NADH. The reduced NADH is then exchanged with the second NAD, and the thioester is attacked by a nucleophilic inorganic phosphate to produce BPG. This is Glyceraldehyde-3-phosphate dehydrogenase (gap) from Bacteroides fragilis (strain YCH46).